A 183-amino-acid chain; its full sequence is Interleukin-24 (183 aa).

Residues 1–28 (MQTSLRQQILPGLSLILLVLNQVPELQG) form the signal peptide. A disulfide bond links Cys-36 and Cys-83. Asn-76 carries N-linked (GlcNAc...) asparagine glycosylation. Lys-99 participates in a covalent cross-link: Glycyl lysine isopeptide (Lys-Gly) (interchain with G-Cter in ubiquitin).

This sequence belongs to the IL-10 family. In terms of processing, glycosylated. Ubiquitination at Lys-99 promotes proteasomal degradation.

The protein localises to the secreted. Multifunctional cytokine mainly produced by T-cells that plays a regulatory role in immune response, tissue homeostasis, host defense, and oncogenesis. Possesses antiviral functions and induces the type I interferon response during influenza infection. Signals through two receptor complexes IL20RA/IL20RB or IL20RB/IL22RA1. In turn, stimulates the JAK1-STAT3 and MAPK pathways and promotes the secretion of pro-inflammatory mediators including IL8 and MMP1. Intracellularly, maintains endoplasmic reticulum homeostasis by restricting the eIF2alpha-CHOP pathway-mediated stress signal. In addition, acts as a quality control mechanism for the ubiquitin proteasome system by alerting the cell to proteasome dysfunction through activation of PKR/EIF2AK2. The chain is Interleukin-24 (Il24) from Rattus norvegicus (Rat).